The chain runs to 513 residues: ATP synthase subunit alpha (513 aa).

169 to 176 (GDRQTGKT) serves as a coordination point for ATP.

This sequence belongs to the ATPase alpha/beta chains family. In terms of assembly, F-type ATPases have 2 components, CF(1) - the catalytic core - and CF(0) - the membrane proton channel. CF(1) has five subunits: alpha(3), beta(3), gamma(1), delta(1), epsilon(1). CF(0) has three main subunits: a(1), b(2) and c(9-12). The alpha and beta chains form an alternating ring which encloses part of the gamma chain. CF(1) is attached to CF(0) by a central stalk formed by the gamma and epsilon chains, while a peripheral stalk is formed by the delta and b chains.

The protein localises to the cell inner membrane. The catalysed reaction is ATP + H2O + 4 H(+)(in) = ADP + phosphate + 5 H(+)(out). Produces ATP from ADP in the presence of a proton gradient across the membrane. The alpha chain is a regulatory subunit. This Enterobacter sp. (strain 638) protein is ATP synthase subunit alpha.